A 101-amino-acid polypeptide reads, in one-letter code: Interleukin-8 (101 aa).

The N-terminal stretch at 1–22 is a signal peptide; it reads MPSQLRVAVLAAFLLSAVLCEG. 2 disulfides stabilise this stretch: Cys34-Cys61 and Cys36-Cys77.

The protein belongs to the intercrine alpha (chemokine CxC) family. Homodimer. Interacts with TNFAIP6 (via Link domain); this interaction interferes with chemokine binding to glycosaminoglycans.

It localises to the secreted. Functionally, chemotactic factor that mediates inflammatory response by attracting neutrophils, basophils, and T-cells to clear pathogens and protect the host from infection. Also plays an important role in neutrophil activation. Released in response to an inflammatory stimulus, exerts its effect by binding to the G-protein-coupled receptors CXCR1 and CXCR2, primarily found in neutrophils, monocytes and endothelial cells. G-protein heterotrimer (alpha, beta, gamma subunits) constitutively binds to CXCR1/CXCR2 receptor and activation by IL8 leads to beta and gamma subunits release from Galpha (GNAI2 in neutrophils) and activation of several downstream signaling pathways including PI3K and MAPK pathways. This chain is Interleukin-8 (CXCL8), found in Cavia porcellus (Guinea pig).